Here is a 462-residue protein sequence, read N- to C-terminus: Glutamate--tRNA ligase (462 aa).

Residues 11–21 carry the 'HIGH' region motif; it reads PSPTGFIHLGN. The 'KMSKS' region motif lies at 243-247; sequence KMSKR. Position 246 (lysine 246) interacts with ATP.

It belongs to the class-I aminoacyl-tRNA synthetase family. Glutamate--tRNA ligase type 1 subfamily. As to quaternary structure, monomer.

It is found in the cytoplasm. The catalysed reaction is tRNA(Glu) + L-glutamate + ATP = L-glutamyl-tRNA(Glu) + AMP + diphosphate. Its function is as follows. Catalyzes the attachment of glutamate to tRNA(Glu) in a two-step reaction: glutamate is first activated by ATP to form Glu-AMP and then transferred to the acceptor end of tRNA(Glu). This is Glutamate--tRNA ligase from Albidiferax ferrireducens (strain ATCC BAA-621 / DSM 15236 / T118) (Rhodoferax ferrireducens).